A 475-amino-acid polypeptide reads, in one-letter code: Ataxin-10 (475 aa).

Omega-N-methylarginine is present on arginine 10. A phosphoserine mark is found at serine 12 and serine 77. Position 82 is a phosphothreonine (threonine 82). Serine 430 is subject to Phosphoserine.

The protein belongs to the ataxin-10 family. Homooligomer. Interacts with GNB2. Interacts with IQCB1. Interacts with OGT. Interacts with PLK1. In terms of processing, polyubiquitinated. Post-translationally, phosphorylation at Ser-12 by AURKB promotes the association of ATXN10 with PLK1. Phosphorylation at Ser-77 and Thr-82 by PLK1 may play a role in the regulation of cytokinesis and may stimulate the proteasome-mediated degradation of ATXN10. As to expression, in high cell density areas; cerebellar cortex, dentate gyrus, hippocampus, anterior olfactory nucleus, primary olfactory cortex.

Its subcellular location is the cytoplasm. The protein localises to the perinuclear region. It localises to the midbody. It is found in the cytoskeleton. The protein resides in the cilium basal body. Its subcellular location is the microtubule organizing center. The protein localises to the centrosome. It localises to the centriole. In terms of biological role, may play a role in the regulation of cytokinesis. May play a role in signaling by stimulating protein glycosylation. Induces neuritogenesis by activating the Ras-MAP kinase pathway and is necessary for the survival of cerebellar neurons. Does not appear to play a major role in ciliogenesis. In Mus musculus (Mouse), this protein is Ataxin-10 (Atxn10).